We begin with the raw amino-acid sequence, 453 residues long: Frizzled/smoothened-like sans CRD protein G (453 aa).

Positions 1–24 (MIYILKNFIIILFFLLIILKRIES) are cleaved as a signal peptide. The Extracellular segment spans residues 25-89 (QSLPSLPSPT…PFFTLDEWNK (65 aa)). N-linked (GlcNAc...) asparagine glycans are attached at residues Asn49 and Asn67. Residues 90-110 (FLYMSLVMGTISFLCGLFLLI) form a helical membrane-spanning segment. At 111–124 (TYSPIVNKTHNRHT) the chain is on the cytoplasmic side. A helical membrane pass occupies residues 125–145 (IGVMCMSFGVCLAMCSDMWNF). Over 146–170 (GSNFTDQKSICPSPGQYLTTSNSRC) the chain is Extracellular. Asn148 carries an N-linked (GlcNAc...) asparagine glycan. Residues 171–191 (LGSGIVLQFGGVFGFLNWTLL) form a helical membrane-spanning segment. Residues 192-209 (SFDLFMNIKGIITKNYDK) lie on the Cytoplasmic side of the membrane. Residues 210–230 (YYFVATFIIAIIFTFVPIVND) traverse the membrane as a helical segment. Over 231–250 (QYSMSYIGLGCWLGSAVYQL) the chain is Extracellular. A helical transmembrane segment spans residues 251-271 (IFFWILLSICLIVSSVFIILI). Residues 272–296 (LKEIYIIIKQSKQKTSLKGNIRPLL) are Cytoplasmic-facing. A helical transmembrane segment spans residues 297 to 317 (CITVTSFAFFYMFFYYISIVI). At 318–352 (EGDYYERILNEYTDCLMDPTKDVSECKFPRMSVAN) the chain is on the extracellular side. Residues 353–373 (EFVFLLCLRLLGIGAFIFYGI) traverse the membrane as a helical segment. Topologically, residues 374-453 (NKEVKKIWLN…DDNFKPIIIK (80 aa)) are cytoplasmic.

Belongs to the G-protein coupled receptor Fz/Smo family.

The protein resides in the membrane. In Dictyostelium discoideum (Social amoeba), this protein is Frizzled/smoothened-like sans CRD protein G (fscG).